The chain runs to 548 residues: DNA ligase (548 aa).

E196 is a binding site for ATP. K198 acts as the N6-AMP-lysine intermediate in catalysis. ATP is bound by residues R203, R218, E250, and F284. E250 contributes to the a divalent metal cation binding site. E345 lines the a divalent metal cation pocket. Residues R361 and K365 each contribute to the ATP site. The tract at residues 515-548 (EQLIRNSQENTKKTFARLATTYDGPSPNKKLKLN) is disordered.

Belongs to the ATP-dependent DNA ligase family. It depends on a divalent metal cation as a cofactor.

It catalyses the reaction ATP + (deoxyribonucleotide)n-3'-hydroxyl + 5'-phospho-(deoxyribonucleotide)m = (deoxyribonucleotide)n+m + AMP + diphosphate.. Able to ligate a double-stranded synthetic DNA substrate containing a single nick and inefficiently ligated a 1 nucleotide gap but did not ligate a 2 nucleotide gap. It is able to ligate short, complementary overhangs but not blunt-ended double-stranded DNA. May be implicated in DNA repair and recombination. The polypeptide is DNA ligase (LIG) (Lepidoptera (butterflies and moths)).